The chain runs to 310 residues: Malate dehydrogenase (310 aa).

NAD(+)-binding positions include 7 to 12 (GAGNVG) and aspartate 32. Residues arginine 81 and arginine 87 each contribute to the substrate site. NAD(+) contacts are provided by residues asparagine 94 and 117 to 119 (VSN). Asparagine 119 and arginine 150 together coordinate substrate. Catalysis depends on histidine 174, which acts as the Proton acceptor.

It belongs to the LDH/MDH superfamily. MDH type 3 family.

It carries out the reaction (S)-malate + NAD(+) = oxaloacetate + NADH + H(+). Its function is as follows. Catalyzes the reversible oxidation of malate to oxaloacetate. This is Malate dehydrogenase from Chlorobium limicola (strain DSM 245 / NBRC 103803 / 6330).